Reading from the N-terminus, the 388-residue chain is GTPase Obg (388 aa).

The Obg domain maps to 1–159 (MKFVDEATIR…RSLRLELMLL (159 aa)). An OBG-type G domain is found at 160-333 (ADVGLLGMPN…LALKLLDFID (174 aa)). Residues 166-173 (GMPNAGKS), 191-195 (FTTLV), 213-216 (DIPG), 283-286 (NKAD), and 314-316 (SAY) each bind GTP. The Mg(2+) site is built by Ser-173 and Thr-193. The disordered stretch occupies residues 356-377 (QNANESVNEDYDDDLDDDDYDD). The segment covering 362-377 (VNEDYDDDLDDDDYDD) has biased composition (acidic residues).

It belongs to the TRAFAC class OBG-HflX-like GTPase superfamily. OBG GTPase family. As to quaternary structure, monomer. The cofactor is Mg(2+).

It is found in the cytoplasm. Functionally, an essential GTPase which binds GTP, GDP and possibly (p)ppGpp with moderate affinity, with high nucleotide exchange rates and a fairly low GTP hydrolysis rate. Plays a role in control of the cell cycle, stress response, ribosome biogenesis and in those bacteria that undergo differentiation, in morphogenesis control. This is GTPase Obg from Shewanella piezotolerans (strain WP3 / JCM 13877).